A 492-amino-acid polypeptide reads, in one-letter code: MKAFHLLLFDGSLIFPECILIFGLILLLMIDSTSDQKDISWFYFISSTSLVMSITALLFRWREEPMIAFSGNLQTNNFNEIFQFLILLCSTLCIPLSVEYIECTEMAITEFLLFILTTTLGGMFLCGANDLITIFVALECFSLCSYLLSGYTKKDVRSNEATTKYLLMGGASSSILVHGFSWLYGSSGGEIELQEIVNGLINTQMYNSPGILIALLFITVGIGFKLSPAPSHQWTPDVYEGSPTPVVAFLSVTSKVAASASATRIFDIPFYFSSNEWHLLLEILAILSMILGNLIAITQTSMKRMLAYSSIGQIGYVIIGIIVGDSNGGYASMITYMLFYISMNLGTFACIVSFGLRTGTDNIRDYAGLYTKDPYLALSLALCLLSLGGLPPLAGFFGKLHLFWCGWQAGLYFLVSIGLLTSVVSIYYYLKIIKLLMTGRNQEITPHVRNYRRSPFRSNNSIEFSMIVCVIASTIPGISMNPIIEIAQDTLF.

13 helical membrane-spanning segments follow: residues 6–26, 39–59, 81–101, 106–126, 131–151, 165–185, 209–229, 277–297, 305–325, 336–356, 377–397, 400–420, and 464–484; these read LLLF…GLIL, ISWF…ALLF, IFQF…VEYI, MAIT…MFLC, LITI…LSGY, YLLM…WLYG, PGIL…LSPA, WHLL…LIAI, MLAY…IVGD, YMLF…SFGL, ALSL…AGFF, LHLF…IGLL, and FSMI…NPII.

Belongs to the complex I subunit 2 family. NDH is composed of at least 16 different subunits, 5 of which are encoded in the nucleus.

It is found in the plastid. It localises to the chloroplast thylakoid membrane. It carries out the reaction a plastoquinone + NADH + (n+1) H(+)(in) = a plastoquinol + NAD(+) + n H(+)(out). The enzyme catalyses a plastoquinone + NADPH + (n+1) H(+)(in) = a plastoquinol + NADP(+) + n H(+)(out). In terms of biological role, NDH shuttles electrons from NAD(P)H:plastoquinone, via FMN and iron-sulfur (Fe-S) centers, to quinones in the photosynthetic chain and possibly in a chloroplast respiratory chain. The immediate electron acceptor for the enzyme in this species is believed to be plastoquinone. Couples the redox reaction to proton translocation, and thus conserves the redox energy in a proton gradient. The sequence is that of NAD(P)H-quinone oxidoreductase subunit 2 A, chloroplastic from Phaseolus vulgaris (Kidney bean).